The primary structure comprises 62 residues: Sperm protamine P1 (62 aa).

The disordered stretch occupies residues 1–62 (MARYRHSRSR…RYSRRRRRRY (62 aa)).

It belongs to the protamine P1 family. In terms of tissue distribution, testis.

The protein localises to the nucleus. It localises to the chromosome. Protamines substitute for histones in the chromatin of sperm during the haploid phase of spermatogenesis. They compact sperm DNA into a highly condensed, stable and inactive complex. In Notamacropus eugenii (Tammar wallaby), this protein is Sperm protamine P1 (PRM1).